We begin with the raw amino-acid sequence, 306 residues long: Agmatinase (306 aa).

6 residues coordinate Mn(2+): His126, Asp149, His151, Asp153, Asp230, and Asp232.

The protein belongs to the arginase family. Agmatinase subfamily. Mn(2+) is required as a cofactor.

The enzyme catalyses agmatine + H2O = urea + putrescine. The protein operates within amine and polyamine biosynthesis; putrescine biosynthesis via agmatine pathway; putrescine from agmatine: step 1/1. Catalyzes the formation of putrescine from agmatine. In Escherichia coli O7:K1 (strain IAI39 / ExPEC), this protein is Agmatinase.